The following is a 498-amino-acid chain: Tumor necrosis factor receptor superfamily member 8 (498 aa).

A signal peptide spans 1 to 18 (MSALLTAAGLLFLGMLQA). Residues 19-287 (FPTDRPLKTT…STGTPFLDPG (269 aa)) lie on the Extracellular side of the membrane. TNFR-Cys repeat units follow at residues 68 to 105 (QCAP…PRIC) and 106 to 146 (ECQP…DTIC). Intrachain disulfides connect Cys-69–Cys-81, Cys-84–Cys-97, Cys-87–Cys-105, Cys-107–Cys-121, and Cys-128–Cys-146. Residues 142 to 168 (KDTICELPSSGSGPNCSNPGDRKTLTS) are disordered. The segment covering 149–160 (PSSGSGPNCSNP) has biased composition (low complexity). 3 N-linked (GlcNAc...) asparagine glycosylation sites follow: Asn-156, Asn-183, and Asn-229. A disordered region spans residues 204–256 (ELVKVPESSSSKAREPSPDPGNAEKNMTLELPSPGTLPDISTSENSKEPASTA). The segment covering 242–256 (DISTSENSKEPASTA) has biased composition (polar residues). The helical transmembrane segment at 288–308 (PVLFWVAMVVLLVGSGSFLLC) threads the bilayer. The Cytoplasmic portion of the chain corresponds to 309 to 498 (YWKACRRRFQ…DHGPTTVSEK (190 aa)). Polar residues predominate over residues 338 to 358 (DSCPTEKLTQPQRSGSVTDPS). 3 disordered regions span residues 338 to 370 (DSCP…SPPP), 389 to 411 (LDDS…VSTE), and 436 to 498 (EVPE…VSEK). 2 positions are modified to phosphoserine: Ser-339 and Ser-353. Basic and acidic residues-rich tracts occupy residues 402–411 (EPPEPRVSTE), 456–465 (EVDHAPHYPE), and 484–498 (EGGK…VSEK).

This sequence belongs to the TNFR8 family. Interacts with TRAF1, TRAF2, TRAF3 and TRAF5. As to expression, detected in thymus and in activated splenocytes.

It is found in the cell membrane. In terms of biological role, receptor for TNFSF8/CD30L. May play a role in the regulation of cellular growth and transformation of activated lymphoblasts. Regulates gene expression through activation of NF-kappa-B. The chain is Tumor necrosis factor receptor superfamily member 8 from Mus musculus (Mouse).